A 144-amino-acid chain; its full sequence is uncharacterized protein (144 aa).

Residues 90-144 (KKEYSALKKSGKIHKVGGSKSSGHRKTKKPKKSMKGGSKTKKLSEKQLMKELLAM) form a disordered region. Residues 98 to 130 (KSGKIHKVGGSKSSGHRKTKKPKKSMKGGSKTK) show a composition bias toward basic residues.

This is an uncharacterized protein from Sputnik virophage.